The following is a 616-amino-acid chain: MIKQAVILAGGLGSRLKDKTKTMPKGFLEIGGTAIVEQSVQKLLAHGIEKIVIGTGHCNEYYDNLAKKYPAIITVKNENYANTGSMGTLEVCASFVNESFLLLESDLIYDSAGLFSLINDERKNLILASGATKSGDEVYLEADEKNCLTGLSKNRDALKNIFGELVGITKLTKSTLDKMCAYAKIHHSDLPKMEYEHALLEAAKTIPVAIKRIEYFVWREIDNEDHLEMAVKNIYPHIVENEKLRAVRREVLLNPGPATTTDSVKYAQVSADICPREKAFGDLMQWLCDELKLFALASETNPDEYETVMFGCSGTGADEVMVSSCVPDTGRLLVIDNGSYGARMAKIADIYKIPMDIFKSSTYEPLDLQKLEAEFATKKYTHLACVYHETTTGLLNPLHIICPMAKKYGMVTIVDAVSAYCGMPMDLKSLGIDFMASTSNKNIQGMAGVGFVICNKAELEKTKDYPMRNYYLNLYDQYAYFAKTHQTRFTPPVQTMYALRQAVLETKQETVQKRYERYTACWNILVAAIKKLGLKMLVKEEHQSHFITAILEPETPKYSFEALHDFAAEHSFTIYPGKLGNIDTFRIANIGDIQPEEMRRFTVKLKEYMNGIGVGV.

The tract at residues 1 to 240 (MIKQAVILAG…VKNIYPHIVE (240 aa)) is 2-aminoethylphosphonate cytidylyltransferase. CMP-(2-aminoethyl)phosphonate-binding residues include Leu-8, Gly-10, Gly-11, Lys-25, Thr-83, Thr-88, Glu-104, and Ser-105. The Mg(2+) site is built by Asp-106 and Asp-136. CMP-(2-aminoethyl)phosphonate is bound by residues Asp-136, Lys-153, and Glu-196. Glu-220 and Asp-222 together coordinate Mg(2+). Residues 250 to 616 (EVLLNPGPAT…EYMNGIGVGV (367 aa)) are 2-aminoethylphosphonate aminotransferase. The pyridoxal 5'-phosphate site is built by Ser-313, Gly-314, Thr-315, Thr-390, Lys-441, and Thr-490.

It in the N-terminal section; belongs to the LicC/PntC cytidylyltransferase family. In the C-terminal section; belongs to the class-V pyridoxal-phosphate-dependent aminotransferase family. PhnW subfamily. Homodimer. The cofactor is Mg(2+). Requires Zn(2+) as cofactor. Pyridoxal 5'-phosphate serves as cofactor.

The catalysed reaction is (2-aminoethyl)phosphonate + CTP = CMP-(2-aminoethyl)phosphonate + diphosphate. It catalyses the reaction (2-aminoethyl)phosphonate + pyruvate = phosphonoacetaldehyde + L-alanine. It participates in phosphorus metabolism; phosphonate biosynthesis. Cytidylyltransferase activity is inhibited in the presence of EDTA and is restored by the addition of Mg(2+) or Zn(2+). Its function is as follows. Bifunctional transferase involved in the biosynthesis of cell-surface phosphonates. The aminotransferase region catalyzes the transformation of phosphonoacetaldehyde (PnAA) to 2-aminoethylphosphonate (AEP). The cytidylyltransferase region catalyzes the activation of 2-aminoethylphosphonate (AEP) to CMP-2-aminoethylphosphonate (CMP-AEP). Cannot use phosphocholine. Exhibits strong activity towards CTP, limited activity towards ATP and no activity with GTP. The polypeptide is Bifunctional 2-aminoethylphosphonate cytidylyltransferase/aminotransferase (Treponema denticola (strain ATCC 35405 / DSM 14222 / CIP 103919 / JCM 8153 / KCTC 15104)).